A 793-amino-acid polypeptide reads, in one-letter code: Protein translocase subunit SecA 2 (793 aa).

ATP is bound by residues glutamine 77, 95–99 (GEGKT), and aspartate 493.

It belongs to the SecA family. As to quaternary structure, monomer and homodimer. Part of the essential Sec protein translocation apparatus which comprises SecA, SecYEG and auxiliary proteins SecDF. Other proteins may also be involved.

The protein localises to the cell membrane. It is found in the cytoplasm. The catalysed reaction is ATP + H2O + cellular proteinSide 1 = ADP + phosphate + cellular proteinSide 2.. In terms of biological role, part of the Sec protein translocase complex. Interacts with the SecYEG preprotein conducting channel. Has a central role in coupling the hydrolysis of ATP to the transfer of proteins into and across the cell membrane, serving as an ATP-driven molecular motor driving the stepwise translocation of polypeptide chains across the membrane. This Streptococcus sanguinis (strain SK36) protein is Protein translocase subunit SecA 2.